Consider the following 182-residue polypeptide: Bifunctional protein PyrR (182 aa).

The PRPP-binding motif lies at 99–111 (VILVDDVLYTGRT).

Belongs to the purine/pyrimidine phosphoribosyltransferase family. PyrR subfamily. Homodimer and homohexamer; in equilibrium.

The catalysed reaction is UMP + diphosphate = 5-phospho-alpha-D-ribose 1-diphosphate + uracil. Its function is as follows. Regulates transcriptional attenuation of the pyrimidine nucleotide (pyr) operon by binding in a uridine-dependent manner to specific sites on pyr mRNA. This disrupts an antiterminator hairpin in the RNA and favors formation of a downstream transcription terminator, leading to a reduced expression of downstream genes. Functionally, also displays a weak uracil phosphoribosyltransferase activity which is not physiologically significant. The chain is Bifunctional protein PyrR from Alkaliphilus metalliredigens (strain QYMF).